The sequence spans 502 residues: Lysine--tRNA ligase (502 aa).

2 residues coordinate Mg(2+): glutamate 399 and glutamate 406.

Belongs to the class-II aminoacyl-tRNA synthetase family. In terms of assembly, homodimer. Mg(2+) serves as cofactor.

The protein resides in the cytoplasm. The catalysed reaction is tRNA(Lys) + L-lysine + ATP = L-lysyl-tRNA(Lys) + AMP + diphosphate. The protein is Lysine--tRNA ligase of Synechococcus sp. (strain RCC307).